The sequence spans 188 residues: Selenoprotein S B (188 aa).

A helical membrane pass occupies residues Glu-29–Ile-49. Residues Thr-116 to Ser-125 show a composition bias toward basic and acidic residues. The segment at Thr-116–Gly-188 is disordered. A compositionally biased stretch (low complexity) spans Ala-136–Pro-147. Sec-187 is a non-standard amino acid (selenocysteine).

It belongs to the selenoprotein S family.

The protein localises to the endoplasmic reticulum membrane. It is found in the cytoplasm. Functionally, involved in the degradation process of misfolded endoplasmic reticulum (ER) luminal proteins. Participates in the transfer of misfolded proteins from the ER to the cytosol, where they are destroyed by the proteasome in a ubiquitin-dependent manner. The polypeptide is Selenoprotein S B (vimp-b) (Xenopus laevis (African clawed frog)).